The sequence spans 389 residues: Alpha-2B adrenergic receptor (389 aa).

Residues A1–L25 form a helical membrane-spanning segment. At T26 to L36 the chain is on the cytoplasmic side. Residues F37–L62 form a helical membrane-spanning segment. Residues G63–C72 lie on the Extracellular side of the membrane. The cysteines at positions 72 and 151 are disulfide-linked. Residues E73–L95 form a helical membrane-spanning segment. Topologically, residues D96 to K117 are cytoplasmic. Residues C118–D140 form a helical membrane-spanning segment. Topologically, residues Q141–E156 are extracellular. A helical transmembrane segment spans residues A157–L180. Residues R181 to V363 are Cytoplasmic-facing. 2 disordered regions span residues P194 to S216 and E233 to Q320. Over residues A196–S205 the composition is skewed to gly residues. The segment covering P255–S267 has biased composition (low complexity). The segment covering L280–E302 has biased composition (acidic residues). The segment covering P303–Q320 has biased composition (low complexity). The helical transmembrane segment at L364–I387 threads the bilayer. Topologically, residues C388–P389 are extracellular.

This sequence belongs to the G-protein coupled receptor 1 family. Adrenergic receptor subfamily. ADRA2B sub-subfamily. Interacts with RAB26. Interacts with PPP1R9B. Interacts with GGA1, GGA2 and GGA3.

The protein resides in the cell membrane. In terms of biological role, alpha-2 adrenergic receptors mediate the catecholamine-induced inhibition of adenylate cyclase through the action of G proteins. This chain is Alpha-2B adrenergic receptor (ADRA2B), found in Equus caballus (Horse).